Consider the following 708-residue polypeptide: E3 ubiquitin-protein ligase Praja-2 (708 aa).

Positions 1-10 (MSQYTEKEPA) are enriched in basic and acidic residues. Disordered regions lie at residues 1–30 (MSQY…GYQT) and 53–90 (ERSL…SSLP). Ser2 is modified (N-acetylserine). Over residues 74 to 90 (ENSSGSSPLDQVDSSLP) the composition is skewed to polar residues. Ser196 is modified (phosphoserine). Disordered regions lie at residues 244 to 342 (GDTE…KQRS), 385 to 411 (TQRE…DNPF), and 425 to 495 (DEDS…QTSL). Thr246 carries the post-translational modification Phosphothreonine. Polar residues predominate over residues 249–276 (VHQNSQEIQRSSQDEMVSTKQQNNTSQE). Phosphoserine occurs at positions 253, 309, and 323. Residues 322 to 332 (ISSSQVDQETG) show a composition bias toward polar residues. The segment covering 333-342 (FNRHEAKQRS) has biased composition (basic and acidic residues). Phosphoserine; by PKA is present on Ser342. Residue Thr389 is modified to Phosphothreonine; by PKA. Ser432 is subject to Phosphoserine. A compositionally biased stretch (acidic residues) spans 467–483 (NEPELQSDSSGPEEENQ). Polar residues predominate over residues 484–493 (ELSLQEGEQT). Residues 531–708 (DGNNNLEDDS…PSNDSIAEAP (178 aa)) are interaction with PRKAR1A, PRKAR2A and PRKAR2B. A mediates interaction with TBC1D31 region spans residues 550–570 (WSLFDGFADGLGVAEAISYVD). The segment at 634–675 (CPICCSEYIKDDIATELPCHHFFHKPCVSIWLQKSGTCPVCR) adopts an RING-type; atypical zinc-finger fold. The segment at 685–708 (ASAAPSSEPDPDAPPSNDSIAEAP) is disordered. The span at 699-708 (PSNDSIAEAP) shows a compositional bias: low complexity.

As to quaternary structure, binds ubiquitin-conjugating enzymes (E2s). In vitro, interacts with the ubiquitin-conjugating enzyme, UBE2D2. The phosphorylated form interacts with PRKAR1A, PRKAR2A and PRKAR2B. Binds the catalytic subunits of cAMP-dependent protein kinase. Interacts with MFHAS1. Interacts with TBC1D31; the interaction is direct and recruits PJA2 to centrosomes.

It localises to the cytoplasm. Its subcellular location is the cell membrane. It is found in the endoplasmic reticulum membrane. The protein resides in the golgi apparatus membrane. The protein localises to the synapse. It localises to the postsynaptic density. Its subcellular location is the cytoskeleton. It is found in the microtubule organizing center. The protein resides in the centrosome. The catalysed reaction is S-ubiquitinyl-[E2 ubiquitin-conjugating enzyme]-L-cysteine + [acceptor protein]-L-lysine = [E2 ubiquitin-conjugating enzyme]-L-cysteine + N(6)-ubiquitinyl-[acceptor protein]-L-lysine.. The protein operates within protein modification; protein ubiquitination. Functionally, has E2-dependent E3 ubiquitin-protein ligase activity. Responsible for ubiquitination of cAMP-dependent protein kinase type I and type II-alpha/beta regulatory subunits and for targeting them for proteasomal degradation. Essential for PKA-mediated long-term memory processes. Through the ubiquitination of MFHAS1, positively regulates the TLR2 signaling pathway that leads to the activation of the downstream p38 and JNK MAP kinases and promotes the polarization of macrophages toward the pro-inflammatory M1 phenotype. Plays a role in ciliogenesis by ubiquitinating OFD1. The protein is E3 ubiquitin-protein ligase Praja-2 (PJA2) of Pongo abelii (Sumatran orangutan).